Consider the following 219-residue polypeptide: Antigen 5 like allergen Cul n 1 (219 aa).

An N-terminal signal peptide occupies residues 1 to 19; it reads MIKKLSIVILFSCISFVLS. Intrachain disulfides connect Cys-23/Cys-45, Cys-28/Cys-124, and Cys-55/Cys-117. The SCP domain occupies 73 to 211; that stretch reads LKVHNRLRNK…RHSGNKYFFW (139 aa).

It belongs to the CRISP family. As to expression, expressed in salivary glands.

Its subcellular location is the secreted. This is Antigen 5 like allergen Cul n 1 from Culicoides nubeculosus (Biting midge).